A 181-amino-acid chain; its full sequence is Adenine phosphoribosyltransferase (181 aa).

Belongs to the purine/pyrimidine phosphoribosyltransferase family. In terms of assembly, homodimer.

It localises to the cytoplasm. It carries out the reaction AMP + diphosphate = 5-phospho-alpha-D-ribose 1-diphosphate + adenine. It participates in purine metabolism; AMP biosynthesis via salvage pathway; AMP from adenine: step 1/1. Functionally, catalyzes a salvage reaction resulting in the formation of AMP, that is energically less costly than de novo synthesis. This chain is Adenine phosphoribosyltransferase, found in Methylorubrum extorquens (strain CM4 / NCIMB 13688) (Methylobacterium extorquens).